A 240-amino-acid polypeptide reads, in one-letter code: Ribonuclease 3 (240 aa).

The region spanning 9–141 is the RNase III domain; that stretch reads VEEFQKETGI…LLAAIYLDQG (133 aa). Glutamate 54 contacts Mg(2+). Aspartate 58 is an active-site residue. Aspartate 127 and glutamate 130 together coordinate Mg(2+). Residue glutamate 130 is part of the active site. The DRBM domain occupies 168 to 237; the sequence is DYKTALQEIV…ARIAYEKLLK (70 aa).

Belongs to the ribonuclease III family. As to quaternary structure, homodimer. The cofactor is Mg(2+).

The protein resides in the cytoplasm. It catalyses the reaction Endonucleolytic cleavage to 5'-phosphomonoester.. Digests double-stranded RNA. Involved in the processing of primary rRNA transcript to yield the immediate precursors to the large and small rRNAs (23S and 16S). Also processes some mRNAs, and tRNAs when they are encoded in the rRNA operon. Probably processes pre-crRNA and tracrRNA of type II CRISPR loci if present in the organism. This is Ribonuclease 3 (rnc) from Thermotoga maritima (strain ATCC 43589 / DSM 3109 / JCM 10099 / NBRC 100826 / MSB8).